The primary structure comprises 81 residues: Photosystem I iron-sulfur center (81 aa).

2 consecutive 4Fe-4S ferredoxin-type domains span residues 2-31 (SHSV…MIPW) and 39-68 (IASA…VRVY). [4Fe-4S] cluster-binding residues include Cys11, Cys14, Cys17, Cys21, Cys48, Cys51, Cys54, and Cys58.

The eukaryotic PSI reaction center is composed of at least 11 subunits. It depends on [4Fe-4S] cluster as a cofactor.

The protein localises to the plastid. It localises to the chloroplast thylakoid membrane. The enzyme catalyses reduced [plastocyanin] + hnu + oxidized [2Fe-2S]-[ferredoxin] = oxidized [plastocyanin] + reduced [2Fe-2S]-[ferredoxin]. Its function is as follows. Apoprotein for the two 4Fe-4S centers FA and FB of photosystem I (PSI); essential for photochemical activity. FB is the terminal electron acceptor of PSI, donating electrons to ferredoxin. The C-terminus interacts with PsaA/B/D and helps assemble the protein into the PSI complex. Required for binding of PsaD and PsaE to PSI. PSI is a plastocyanin-ferredoxin oxidoreductase, converting photonic excitation into a charge separation, which transfers an electron from the donor P700 chlorophyll pair to the spectroscopically characterized acceptors A0, A1, FX, FA and FB in turn. The protein is Photosystem I iron-sulfur center of Spinacia oleracea (Spinach).